Reading from the N-terminus, the 261-residue chain is Hemin import ATP-binding protein HmuV (261 aa).

The ABC transporter domain maps to 8–243 (IRVTDLSYSV…ESIRTAYGHE (236 aa)). Residue 40–47 (GRNGAGKS) coordinates ATP.

It belongs to the ABC transporter superfamily. Heme (hemin) importer (TC 3.A.1.14.5) family. In terms of assembly, the complex is composed of two ATP-binding proteins (HmuV), two transmembrane proteins (HmuU) and a solute-binding protein (HmuT).

The protein localises to the cell membrane. In terms of biological role, part of the ABC transporter complex HmuTUV involved in hemin import. Responsible for energy coupling to the transport system. The protein is Hemin import ATP-binding protein HmuV of Deinococcus radiodurans (strain ATCC 13939 / DSM 20539 / JCM 16871 / CCUG 27074 / LMG 4051 / NBRC 15346 / NCIMB 9279 / VKM B-1422 / R1).